The chain runs to 134 residues: Glycine cleavage system H protein (134 aa).

One can recognise a Lipoyl-binding domain in the interval 24 to 106 (TVRVGITDYA…YGAGWLLDIQ (83 aa)). At K65 the chain carries N6-lipoyllysine.

This sequence belongs to the GcvH family. In terms of assembly, the glycine cleavage system is composed of four proteins: P, T, L and H. (R)-lipoate is required as a cofactor.

Its function is as follows. The glycine cleavage system catalyzes the degradation of glycine. The H protein shuttles the methylamine group of glycine from the P protein to the T protein. This Mycobacterium tuberculosis (strain ATCC 25177 / H37Ra) protein is Glycine cleavage system H protein.